The sequence spans 126 residues: Nuclear transport factor 2B (126 aa).

Position 2 is an N-acetylserine (serine 2). An NTF2 domain is found at 9–123; it reads VSKAFVEHYY…FYVFNDIFRL (115 aa).

As to quaternary structure, interacts with RAN1. Expressed in roots, stems, leaves and flowers, and, at low levels, in siliques.

The protein localises to the cytoplasm. The protein resides in the nucleus. Its subcellular location is the nucleus envelope. Facilitates protein transport into the nucleus. Interacts with various nucleoporins and with Ran-GDP. Could be part of a multicomponent system of cytosolic factors that assemble at the pore complex during nuclear import. This is Nuclear transport factor 2B from Arabidopsis thaliana (Mouse-ear cress).